The following is a 478-amino-acid chain: Oxidative stress-induced growth inhibitor 1 (478 aa).

Residue S12 is modified to Phosphoserine.

This sequence belongs to the OKL38 family. NADPH is required as a cofactor.

It localises to the midbody. Functionally, monooxygenase catalytic activity. Involved in regulation of cytokinesis; promotes RHOA activity, probably acting locally at the midbody in late cytokinesis. Monooxygenase activity is involved in stabilizing transient structures between daughter cells, termed intercellular bridges, before abscission. Regulates differentiation and proliferation through the regulation of cell death. In Mus musculus (Mouse), this protein is Oxidative stress-induced growth inhibitor 1.